The primary structure comprises 1103 residues: Retinal guanylyl cyclase 1 (1103 aa).

An N-terminal signal peptide occupies residues 1–51 (MTACARRAGGLPDPGLCGPAWWAPSLPRLPRALPRLPLLLLLLLLQPPALS). The Extracellular portion of the chain corresponds to 52-462 (AVFTVGVLGP…PNNICGGGLE (411 aa)). Residue Asn-297 is glycosylated (N-linked (GlcNAc...) asparagine). A helical transmembrane segment spans residues 463-487 (PGLVFLGFLLVVGMGLAGAFLAHYV). At 488–1103 (RHRLLHMQMV…LEKARPGQFS (616 aa)) the chain is on the cytoplasmic side. Residues 525–808 (QGSRSSLGAR…DHTFDLFKNI (284 aa)) form the Protein kinase domain. The Guanylate cyclase domain occupies 880 to 1010 (TLYFSDIVGF…DTVNTASRME (131 aa)). Residues 1065–1103 (PIPKPPDLQPGSSNHGISLQEIPPERRRKLEKARPGQFS) form a disordered region.

The protein belongs to the adenylyl cyclase class-4/guanylyl cyclase family. As to quaternary structure, homodimer; requires homodimerization for guanylyl cyclase activity. Interacts with RD3; promotes the exit of GUCY2D from the endoplasmic reticulum and its trafficking to the photoreceptor outer segments. Interaction with RD3 negatively regulates guanylate cyclase activity. Retina.

Its subcellular location is the photoreceptor outer segment membrane. It localises to the endoplasmic reticulum membrane. The enzyme catalyses GTP = 3',5'-cyclic GMP + diphosphate. With respect to regulation, activated by GUCA1A when free calcium ions concentration is low, and inhibited by GUCA1A when free calcium ions concentration is high. Negatively regulated by RD3; inhibits the basal and GUCA1A-stimulated guanylate cyclase activity. Catalyzes the synthesis of cyclic GMP (cGMP) in rods and cones of photoreceptors. Plays an essential role in phototransduction, by mediating cGMP replenishment. May also participate in the trafficking of membrane-asociated proteins to the photoreceptor outer segment membrane. In Homo sapiens (Human), this protein is Retinal guanylyl cyclase 1 (GUCY2D).